The following is a 635-amino-acid chain: Probable monoacyl phosphatidylinositol tetramannoside-binding protein LpqW (635 aa).

The first 26 residues, 1–26 (MGVPSPVRRVCVTVGALVALACMVLA), serve as a signal peptide directing secretion. 3 disordered regions span residues 32–52 (PPPA…PRRP), 389–412 (NTSV…GPPE), and 511–551 (NAPT…LVKA). 2 stretches are compositionally biased toward low complexity: residues 390–411 (TSVS…TGPP) and 511–531 (NAPT…APDT).

Belongs to the bacterial solute-binding protein 5 family.

The protein operates within phospholipid metabolism; phosphatidylinositol metabolism. May directly or indirectly regulate the accessibility of the key branch point intermediate, monoacyl phosphatidylinositol tetramannoside (AcPIM4), to the elongating alpha-1,6 mannosyltransferases which could regulate the lipoarabinomannans (LAMs) biosynthesis. The chain is Probable monoacyl phosphatidylinositol tetramannoside-binding protein LpqW (lpqW) from Mycobacterium tuberculosis (strain CDC 1551 / Oshkosh).